Here is a 99-residue protein sequence, read N- to C-terminus: Glycine-rich protein (99 aa).

Positions 1 to 18 (MKSMIAVLLLALVATSMA) are cleaved as a signal peptide.

Belongs to the non-disulfide-bridged peptide (NDBP) superfamily. In terms of tissue distribution, expressed by the venom gland.

The protein localises to the secreted. The protein is Glycine-rich protein of Lychas mucronatus (Chinese swimming scorpion).